Consider the following 217-residue polypeptide: tRNA 5-hydroxyuridine methyltransferase (217 aa).

Residues M38, S68, E85, D113–A114, and D133 contribute to the S-adenosyl-L-methionine site. Mg(2+)-binding residues include D133, D159, and N160.

The protein belongs to the class I-like SAM-binding methyltransferase superfamily. Cation-dependent O-methyltransferase family. Homodimer.

The enzyme catalyses 5-hydroxyuridine(34) in tRNA + S-adenosyl-L-methionine = 5-methoxyuridine(34) in tRNA + S-adenosyl-L-homocysteine + H(+). Its function is as follows. Catalyzes the methylation of 5-hydroxyuridine (ho5U) to form 5-methoxyuridine (mo5U) at position 34 in tRNAs. The chain is tRNA 5-hydroxyuridine methyltransferase from Bacillus subtilis (strain 168).